The primary structure comprises 378 residues: Chaperone protein DnaJ 2 (378 aa).

The J domain maps to 4–68 (DYYGLLGVSR…EKRRIVDLGG (65 aa)). The segment at 128–210 (GVTKQVTVDT…CVGDGRVRAR (83 aa)) adopts a CR-type zinc-finger fold. Zn(2+) is bound by residues C141, C144, C158, C161, C184, C187, C198, and C201. CXXCXGXG motif repeat units lie at residues 141–148 (CDRCQGKG), 158–165 (CDTCGGRG), 184–191 (CPTCRGVG), and 198–205 (CCQCVGDG).

Belongs to the DnaJ family. In terms of assembly, homodimer. The cofactor is Zn(2+).

It localises to the cytoplasm. Functionally, participates actively in the response to hyperosmotic and heat shock by preventing the aggregation of stress-denatured proteins and by disaggregating proteins, also in an autonomous, DnaK-independent fashion. Unfolded proteins bind initially to DnaJ; upon interaction with the DnaJ-bound protein, DnaK hydrolyzes its bound ATP, resulting in the formation of a stable complex. GrpE releases ADP from DnaK; ATP binding to DnaK triggers the release of the substrate protein, thus completing the reaction cycle. Several rounds of ATP-dependent interactions between DnaJ, DnaK and GrpE are required for fully efficient folding. Also involved, together with DnaK and GrpE, in the DNA replication of plasmids through activation of initiation proteins. This Mycobacterium leprae (strain TN) protein is Chaperone protein DnaJ 2.